A 501-amino-acid chain; its full sequence is ATP synthase subunit alpha (501 aa).

Residue 169 to 176 (GDRQTGKT) participates in ATP binding.

Belongs to the ATPase alpha/beta chains family. In terms of assembly, F-type ATPases have 2 components, CF(1) - the catalytic core - and CF(0) - the membrane proton channel. CF(1) has five subunits: alpha(3), beta(3), gamma(1), delta(1), epsilon(1). CF(0) has three main subunits: a(1), b(2) and c(9-12). The alpha and beta chains form an alternating ring which encloses part of the gamma chain. CF(1) is attached to CF(0) by a central stalk formed by the gamma and epsilon chains, while a peripheral stalk is formed by the delta and b chains.

The protein localises to the cell inner membrane. It carries out the reaction ATP + H2O + 4 H(+)(in) = ADP + phosphate + 5 H(+)(out). Functionally, produces ATP from ADP in the presence of a proton gradient across the membrane. The alpha chain is a regulatory subunit. This chain is ATP synthase subunit alpha, found in Campylobacter jejuni subsp. jejuni serotype O:23/36 (strain 81-176).